Here is a 120-residue protein sequence, read N- to C-terminus: Large ribosomal subunit protein bL20 (120 aa).

This sequence belongs to the bacterial ribosomal protein bL20 family.

Binds directly to 23S ribosomal RNA and is necessary for the in vitro assembly process of the 50S ribosomal subunit. It is not involved in the protein synthesizing functions of that subunit. This Mesoplasma florum (strain ATCC 33453 / NBRC 100688 / NCTC 11704 / L1) (Acholeplasma florum) protein is Large ribosomal subunit protein bL20.